The chain runs to 316 residues: Lipoyl synthase (316 aa).

[4Fe-4S] cluster-binding residues include C66, C71, C77, C92, C96, C99, and S306. The Radical SAM core domain maps to 78–295 (YSQQTATFMV…ADIAKSMGFK (218 aa)).

It belongs to the radical SAM superfamily. Lipoyl synthase family. [4Fe-4S] cluster is required as a cofactor.

It is found in the cytoplasm. The catalysed reaction is [[Fe-S] cluster scaffold protein carrying a second [4Fe-4S](2+) cluster] + N(6)-octanoyl-L-lysyl-[protein] + 2 oxidized [2Fe-2S]-[ferredoxin] + 2 S-adenosyl-L-methionine + 4 H(+) = [[Fe-S] cluster scaffold protein] + N(6)-[(R)-dihydrolipoyl]-L-lysyl-[protein] + 4 Fe(3+) + 2 hydrogen sulfide + 2 5'-deoxyadenosine + 2 L-methionine + 2 reduced [2Fe-2S]-[ferredoxin]. Its pathway is protein modification; protein lipoylation via endogenous pathway; protein N(6)-(lipoyl)lysine from octanoyl-[acyl-carrier-protein]: step 2/2. Its function is as follows. Catalyzes the radical-mediated insertion of two sulfur atoms into the C-6 and C-8 positions of the octanoyl moiety bound to the lipoyl domains of lipoate-dependent enzymes, thereby converting the octanoylated domains into lipoylated derivatives. The protein is Lipoyl synthase of Rhodopirellula baltica (strain DSM 10527 / NCIMB 13988 / SH1).